The chain runs to 374 residues: Alcohol dehydrogenase class-3 (374 aa).

An N-acetylalanine modification is found at Ala-2. Cys-45, His-67, Cys-97, Cys-100, Cys-103, Cys-111, and Cys-174 together coordinate Zn(2+). N6-succinyllysine is present on Lys-233. Position 247 is a phosphoserine (Ser-247). N6-succinyllysine is present on Lys-315. 2 positions are modified to phosphoserine: Ser-324 and Ser-351.

This sequence belongs to the zinc-containing alcohol dehydrogenase family. Class-III subfamily. Homodimer. Requires Zn(2+) as cofactor.

It localises to the cytoplasm. It carries out the reaction a primary alcohol + NAD(+) = an aldehyde + NADH + H(+). The enzyme catalyses a secondary alcohol + NAD(+) = a ketone + NADH + H(+). The catalysed reaction is S-(hydroxymethyl)glutathione + NADP(+) = S-formylglutathione + NADPH + H(+). It catalyses the reaction S-(hydroxymethyl)glutathione + NAD(+) = S-formylglutathione + NADH + H(+). It carries out the reaction 20-oxo-(5Z,8Z,11Z,14Z)-eicosatetraenoate + NAD(+) + H2O = (5Z,8Z,11Z,14Z)-eicosatetraenedioate + NADH + 2 H(+). The enzyme catalyses 20-hydroxy-(5Z,8Z,11Z,14Z)-eicosatetraenoate + NAD(+) = 20-oxo-(5Z,8Z,11Z,14Z)-eicosatetraenoate + NADH + H(+). The catalysed reaction is S-nitrosoglutathione + NADH + H(+) = S-(hydroxysulfenamide)glutathione + NAD(+). In terms of biological role, catalyzes the oxidation of long-chain primary alcohols and the oxidation of S-(hydroxymethyl) glutathione. Also oxidizes long chain omega-hydroxy fatty acids, such as 20-HETE, producing both the intermediate aldehyde, 20-oxoarachidonate and the end product, a dicarboxylic acid, (5Z,8Z,11Z,14Z)-eicosatetraenedioate. Class-III ADH is remarkably ineffective in oxidizing ethanol. Required for clearance of cellular formaldehyde, a cytotoxic and carcinogenic metabolite that induces DNA damage. Also acts as a S-nitroso-glutathione reductase by catalyzing the NADH-dependent reduction of S-nitrosoglutathione, thereby regulating protein S-nitrosylation. The protein is Alcohol dehydrogenase class-3 of Homo sapiens (Human).